The following is a 61-amino-acid chain: Small ribosomal subunit protein uS14B (61 aa).

Residues Cys24, Cys27, Cys40, and Cys43 each coordinate Zn(2+).

The protein belongs to the universal ribosomal protein uS14 family. Zinc-binding uS14 subfamily. Part of the 30S ribosomal subunit. Contacts proteins S3 and S10. It depends on Zn(2+) as a cofactor.

Binds 16S rRNA, required for the assembly of 30S particles and may also be responsible for determining the conformation of the 16S rRNA at the A site. This is Small ribosomal subunit protein uS14B from Oceanobacillus iheyensis (strain DSM 14371 / CIP 107618 / JCM 11309 / KCTC 3954 / HTE831).